Reading from the N-terminus, the 187-residue chain is Ribosome-recycling factor (187 aa).

Belongs to the RRF family.

It is found in the cytoplasm. Its function is as follows. Responsible for the release of ribosomes from messenger RNA at the termination of protein biosynthesis. May increase the efficiency of translation by recycling ribosomes from one round of translation to another. This chain is Ribosome-recycling factor, found in Methylobacterium nodulans (strain LMG 21967 / CNCM I-2342 / ORS 2060).